Consider the following 138-residue polypeptide: Protein Rrf1 (138 aa).

The 113-residue stretch at 4-116 (RILVVQEDPD…LLLALVDRAL (113 aa)) folds into the Response regulatory domain. 4-aspartylphosphate is present on residues Asp13 and Asp53.

Functionally, may be involved in regulation of gene transcription. Belongs to the family of response regulators, and members of this family involved in the regulation of gene transcription are two-domain proteins. This protein contains only the N-terminal phosphorylation domain and not the C-terminal DNA-binding domain but it may bind to Rrf2 protein and the latter may bind to DNA. The polypeptide is Protein Rrf1 (rrf1) (Nitratidesulfovibrio vulgaris (strain ATCC 29579 / DSM 644 / CCUG 34227 / NCIMB 8303 / VKM B-1760 / Hildenborough) (Desulfovibrio vulgaris)).